A 415-amino-acid polypeptide reads, in one-letter code: Phosphoribosylamine--glycine ligase (415 aa).

In terms of domain architecture, ATP-grasp spans 108–311; that stretch reads KKIMEKYNIP…LMQHIIDLDE (204 aa). 134 to 191 serves as a coordination point for ATP; that stretch reads IENCELPVVVKKDGLAAGKGVIIADTIEAARSAIEIMYGDEEEGTVVFETFLEGEEFS. 2 residues coordinate Mg(2+): glutamate 281 and asparagine 283.

The protein belongs to the GARS family. It depends on Mg(2+) as a cofactor. Mn(2+) serves as cofactor.

The enzyme catalyses 5-phospho-beta-D-ribosylamine + glycine + ATP = N(1)-(5-phospho-beta-D-ribosyl)glycinamide + ADP + phosphate + H(+). It functions in the pathway purine metabolism; IMP biosynthesis via de novo pathway; N(1)-(5-phospho-D-ribosyl)glycinamide from 5-phospho-alpha-D-ribose 1-diphosphate: step 2/2. This Staphylococcus aureus (strain COL) protein is Phosphoribosylamine--glycine ligase.